We begin with the raw amino-acid sequence, 140 residues long: Large-conductance mechanosensitive channel (140 aa).

The next 3 helical transmembrane spans lie at 14 to 34 (VLDL…VKSL), 37 to 57 (YLIN…DWVL), and 66 to 86 (FGSF…VFIL).

Belongs to the MscL family. As to quaternary structure, homopentamer.

It is found in the cell membrane. Functionally, channel that opens in response to stretch forces in the membrane lipid bilayer. May participate in the regulation of osmotic pressure changes within the cell. The sequence is that of Large-conductance mechanosensitive channel from Pediococcus pentosaceus (strain ATCC 25745 / CCUG 21536 / LMG 10740 / 183-1w).